Here is a 101-residue protein sequence, read N- to C-terminus: MVCEKCEKKLGRVITPDTWKDGARNTTESGGRKINENKMLTSKKAGFDPYGKSGFSTCRICKSSVHQSGSHYCQGCAYKKGICAMCGKKVLDTKNYKQTSV.

Belongs to the CRIPT family. As to quaternary structure, component of the minor spliceosome, which splices U12-type introns.

Its subcellular location is the cytoplasm. In terms of biological role, as a component of the minor spliceosome, involved in the splicing of U12-type introns in pre-mRNAs. This chain is Cysteine-rich PDZ-binding protein (cript), found in Ictalurus punctatus (Channel catfish).